We begin with the raw amino-acid sequence, 64 residues long: MVKHMCESNLYSEGGDLLMEDVIFIEVLEDGIRATDILDSQKEFPGKLTRIDLDKHRIYIETED.

This is an uncharacterized protein from Methanothermobacter thermautotrophicus (strain ATCC 29096 / DSM 1053 / JCM 10044 / NBRC 100330 / Delta H) (Methanobacterium thermoautotrophicum).